Here is a 356-residue protein sequence, read N- to C-terminus: 5-formaminoimidazole-4-carboxamide-1-(beta)-D-ribofuranosyl 5'-monophosphate synthetase (356 aa).

Residues His27 and Ser94 each coordinate 5-amino-1-(5-phospho-beta-D-ribosyl)imidazole-4-carboxamide. An ATP-grasp domain is found at 101–333 (TENFAELTVP…YADLIQEDLS (233 aa)). ATP is bound by residues 145–196 (PRDI…TRYY) and Glu226. Asn255 provides a ligand contact to 5-amino-1-(5-phospho-beta-D-ribosyl)imidazole-4-carboxamide. Residues Glu293 and Glu306 each coordinate Mg(2+).

Belongs to the phosphohexose mutase family. Mg(2+) is required as a cofactor. It depends on Mn(2+) as a cofactor.

The enzyme catalyses 5-amino-1-(5-phospho-beta-D-ribosyl)imidazole-4-carboxamide + formate + ATP = 5-formamido-1-(5-phospho-D-ribosyl)imidazole-4-carboxamide + ADP + phosphate. It functions in the pathway purine metabolism; IMP biosynthesis via de novo pathway; 5-formamido-1-(5-phospho-D-ribosyl)imidazole-4-carboxamide from 5-amino-1-(5-phospho-D-ribosyl)imidazole-4-carboxamide (formate route): step 1/1. Its function is as follows. Catalyzes the ATP- and formate-dependent formylation of 5-aminoimidazole-4-carboxamide-1-beta-d-ribofuranosyl 5'-monophosphate (AICAR) to 5-formaminoimidazole-4-carboxamide-1-beta-d-ribofuranosyl 5'-monophosphate (FAICAR) in the absence of folates. In Methanosarcina acetivorans (strain ATCC 35395 / DSM 2834 / JCM 12185 / C2A), this protein is 5-formaminoimidazole-4-carboxamide-1-(beta)-D-ribofuranosyl 5'-monophosphate synthetase.